A 203-amino-acid polypeptide reads, in one-letter code: FMN-dependent NADH:quinone oxidoreductase 5 (203 aa).

FMN-binding positions include Ser9, 15–17 (SAS), 95–98 (MYNF), and 139–142 (TSGG).

It belongs to the azoreductase type 1 family. In terms of assembly, homodimer. The cofactor is FMN.

The catalysed reaction is 2 a quinone + NADH + H(+) = 2 a 1,4-benzosemiquinone + NAD(+). It carries out the reaction N,N-dimethyl-1,4-phenylenediamine + anthranilate + 2 NAD(+) = 2-(4-dimethylaminophenyl)diazenylbenzoate + 2 NADH + 2 H(+). Its function is as follows. Quinone reductase that provides resistance to thiol-specific stress caused by electrophilic quinones. Functionally, also exhibits azoreductase activity. Catalyzes the reductive cleavage of the azo bond in aromatic azo compounds to the corresponding amines. The protein is FMN-dependent NADH:quinone oxidoreductase 5 of Pseudomonas fluorescens (strain ATCC BAA-477 / NRRL B-23932 / Pf-5).